The primary structure comprises 424 residues: UDP-N-acetylglucosamine 1-carboxyvinyltransferase (424 aa).

Residue 22 to 23 (KN) coordinates phosphoenolpyruvate. Position 93 (Arg-93) interacts with UDP-N-acetyl-alpha-D-glucosamine. Cys-117 serves as the catalytic Proton donor. Position 117 is a 2-(S-cysteinyl)pyruvic acid O-phosphothioketal (Cys-117). Residues 122-126 (RPIDL), Asp-307, and Val-329 contribute to the UDP-N-acetyl-alpha-D-glucosamine site.

This sequence belongs to the EPSP synthase family. MurA subfamily.

The protein localises to the cytoplasm. The catalysed reaction is phosphoenolpyruvate + UDP-N-acetyl-alpha-D-glucosamine = UDP-N-acetyl-3-O-(1-carboxyvinyl)-alpha-D-glucosamine + phosphate. It functions in the pathway cell wall biogenesis; peptidoglycan biosynthesis. Functionally, cell wall formation. Adds enolpyruvyl to UDP-N-acetylglucosamine. The polypeptide is UDP-N-acetylglucosamine 1-carboxyvinyltransferase (Pelodictyon phaeoclathratiforme (strain DSM 5477 / BU-1)).